Consider the following 360-residue polypeptide: Phospho-N-acetylmuramoyl-pentapeptide-transferase (360 aa).

10 helical membrane passes run 24 to 44 (RAVMAALTALAFSLMFGPWTI), 69 to 89 (GTPTMGGSLILTAITVSTLLW), 92 to 112 (WANPYIWILLGVLLATGALGF), 133 to 153 (MVWQSSVAIIAGLALFYLAAN), 158 to 178 (ILIVPFFKQIALPLGVVGFLV), 199 to 219 (GLATFPVVLVAAGLAIFAYAS), 239 to 259 (VVIFCTAMCGACLGFLWFNAY), 263 to 283 (VFMGDVGALALGAALGTVAVI), 288 to 308 (FVLVIMGGLFVVEAVSVMLQV), and 337 to 357 (QVVVRFWIITIVLVLIGLSTL).

The protein belongs to the glycosyltransferase 4 family. MraY subfamily. Requires Mg(2+) as cofactor.

It is found in the cell inner membrane. The catalysed reaction is UDP-N-acetyl-alpha-D-muramoyl-L-alanyl-gamma-D-glutamyl-meso-2,6-diaminopimeloyl-D-alanyl-D-alanine + di-trans,octa-cis-undecaprenyl phosphate = di-trans,octa-cis-undecaprenyl diphospho-N-acetyl-alpha-D-muramoyl-L-alanyl-D-glutamyl-meso-2,6-diaminopimeloyl-D-alanyl-D-alanine + UMP. It participates in cell wall biogenesis; peptidoglycan biosynthesis. Catalyzes the initial step of the lipid cycle reactions in the biosynthesis of the cell wall peptidoglycan: transfers peptidoglycan precursor phospho-MurNAc-pentapeptide from UDP-MurNAc-pentapeptide onto the lipid carrier undecaprenyl phosphate, yielding undecaprenyl-pyrophosphoryl-MurNAc-pentapeptide, known as lipid I. The polypeptide is Phospho-N-acetylmuramoyl-pentapeptide-transferase (Neisseria meningitidis serogroup A / serotype 4A (strain DSM 15465 / Z2491)).